We begin with the raw amino-acid sequence, 190 residues long: Elongation factor P-like protein (190 aa).

Belongs to the elongation factor P family.

In Escherichia fergusonii (strain ATCC 35469 / DSM 13698 / CCUG 18766 / IAM 14443 / JCM 21226 / LMG 7866 / NBRC 102419 / NCTC 12128 / CDC 0568-73), this protein is Elongation factor P-like protein.